Consider the following 417-residue polypeptide: Serine hydroxymethyltransferase (417 aa).

Residues Leu-122 and 126-128 contribute to the (6S)-5,6,7,8-tetrahydrofolate site; that span reads GHL. Lys-230 is subject to N6-(pyridoxal phosphate)lysine. 355 to 357 serves as a coordination point for (6S)-5,6,7,8-tetrahydrofolate; that stretch reads SPF.

The protein belongs to the SHMT family. Homodimer. The cofactor is pyridoxal 5'-phosphate.

The protein resides in the cytoplasm. It catalyses the reaction (6R)-5,10-methylene-5,6,7,8-tetrahydrofolate + glycine + H2O = (6S)-5,6,7,8-tetrahydrofolate + L-serine. It participates in one-carbon metabolism; tetrahydrofolate interconversion. Its pathway is amino-acid biosynthesis; glycine biosynthesis; glycine from L-serine: step 1/1. Catalyzes the reversible interconversion of serine and glycine with tetrahydrofolate (THF) serving as the one-carbon carrier. This reaction serves as the major source of one-carbon groups required for the biosynthesis of purines, thymidylate, methionine, and other important biomolecules. Also exhibits THF-independent aldolase activity toward beta-hydroxyamino acids, producing glycine and aldehydes, via a retro-aldol mechanism. The polypeptide is Serine hydroxymethyltransferase (Francisella tularensis subsp. mediasiatica (strain FSC147)).